Consider the following 369-residue polypeptide: Protein V (369 aa).

Disordered regions lie at residues 1 to 24 and 38 to 320; these read MDQD…GRES and SEPT…GHRR. A compositionally biased stretch (basic and acidic residues) spans 7-20; it reads ISKEDSEVEREASG. The span at 50-61 shows a compositional bias: polar residues; the sequence is LHNTINTLQRPG. Basic and acidic residues-rich tracts occupy residues 99-110 and 150-168; these read AEAHARNVDKQN and GAED…RGED. Ser249, Ser257, and Ser260 each carry phosphoserine; by host. The Zn(2+) site is built by His318, Cys337, Cys341, Cys353, Cys355, Cys358, Cys362, and Cys365.

It belongs to the paramyxoviruses V protein family. Interacts with host IFIH1/MDA5 and DHX58/LGP2. Interacts with host IRF3. Interacts with host RIGI regulatory protein (via CARDs domain) and host TRIM25 (via SPRY domain); these interactions prevent TRIM25-mediated ubiquitination of RIG-I and disrupts downstream RIG-I signaling.

It localises to the host cytoplasm. Its function is as follows. Plays an essential role in the inhibition of host immune response. Prevents the establishment of cellular antiviral state by blocking interferon-alpha/beta (IFN-alpha/beta) production and signaling pathway. Interacts with host IFIH1/MDA5 and DHX58/LGP2 to inhibit the transduction pathway involved in the activation of IFN-beta promoter, thus protecting the virus against cell antiviral state. Also interacts with and inhibits host IRF3. Blocks the type I interferon signaling pathway by disrupting the RIG-I signaling pathway. This chain is Protein V (P/V/C), found in Sendai virus (strain Hamamatsu) (SeV).